A 92-amino-acid polypeptide reads, in one-letter code: Small ribosomal subunit protein uS19 (92 aa).

It belongs to the universal ribosomal protein uS19 family.

Protein S19 forms a complex with S13 that binds strongly to the 16S ribosomal RNA. The polypeptide is Small ribosomal subunit protein uS19 (Dinoroseobacter shibae (strain DSM 16493 / NCIMB 14021 / DFL 12)).